Consider the following 209-residue polypeptide: NAD-reducing hydrogenase HoxS subunit delta (209 aa).

As to quaternary structure, tetramer of an alpha and a gamma subunits (flavin-containing dimer), and a delta and a nickel-containing beta subunits (hydrogenase dimer). [4Fe-4S] cluster is required as a cofactor. [3Fe-4S] cluster serves as cofactor. It depends on [2Fe-2S] cluster as a cofactor. Requires FMN as cofactor. The cofactor is Ni(2+).

The protein resides in the cytoplasm. It catalyses the reaction H2 + NAD(+) = NADH + H(+). In Cupriavidus necator (strain ATCC 17699 / DSM 428 / KCTC 22496 / NCIMB 10442 / H16 / Stanier 337) (Ralstonia eutropha), this protein is NAD-reducing hydrogenase HoxS subunit delta (hoxY).